Consider the following 345-residue polypeptide: Platelet-derived growth factor C (345 aa).

A signal peptide spans 1–22 (MLLFGFLLLTFALVSQRQGAEA). Asn-25 and Asn-55 each carry an N-linked (GlcNAc...) asparagine glycan. A CUB domain is found at 46–163 (HEKIITVSAN…PGFCIHYTLL (118 aa)). 4 disulfides stabilise this stretch: Cys-104–Cys-124, Cys-250–Cys-294, Cys-280–Cys-335, and Cys-287–Cys-337.

Belongs to the PDGF/VEGF growth factor family. Homodimer; disulfide-linked. Interacts with PDGFRA homodimers, and with heterodimers formed by PDGFRA and PDGFRB. Proteolytic removal of the N-terminal CUB domain releasing the core domain is necessary for unmasking the receptor-binding epitopes of the core domain. Cleavage after basic residues in the hinge region (region connecting the CUB and growth factor domains) gives rise to the receptor-binding form.

Its subcellular location is the secreted. Functionally, growth factor that plays an essential role in the regulation of embryonic development, cell proliferation, cell migration, survival and chemotaxis. Potent mitogen and chemoattractant for cells of mesenchymal origin. Required for normal skeleton formation during embryonic development. Required for normal skin morphogenesis during embryonic development. Plays an important role in wound healing, in angiogenesis and blood vessel development. This chain is Platelet-derived growth factor C (PDGFC), found in Gekko japonicus (Schlegel's Japanese gecko).